The sequence spans 484 residues: Glutamate--tRNA ligase (484 aa).

The 'HIGH' region signature appears at Pro-11–Asn-21. A 'KMSKS' region motif is present at residues Lys-255 to Arg-259. Lys-258 lines the ATP pocket.

Belongs to the class-I aminoacyl-tRNA synthetase family. Glutamate--tRNA ligase type 1 subfamily. Monomer.

It localises to the cytoplasm. The enzyme catalyses tRNA(Glu) + L-glutamate + ATP = L-glutamyl-tRNA(Glu) + AMP + diphosphate. Catalyzes the attachment of glutamate to tRNA(Glu) in a two-step reaction: glutamate is first activated by ATP to form Glu-AMP and then transferred to the acceptor end of tRNA(Glu). The sequence is that of Glutamate--tRNA ligase from Streptococcus agalactiae serotype V (strain ATCC BAA-611 / 2603 V/R).